A 418-amino-acid polypeptide reads, in one-letter code: AP-1 complex subunit mu (418 aa).

The MHD domain occupies 176–417 (NNEAYFDVTE…VTKAGKFQVR (242 aa)).

The protein belongs to the adaptor complexes medium subunit family. In terms of assembly, adaptor protein complex 1 (AP-1) is a heterotetramer composed of two large adaptins (gamma- and beta'-type subunits), a medium adaptin (mu-type subunit AP47) and a small adaptin (sigma-type subunit AP19). Regulated by phosphorylation.

It localises to the golgi apparatus. Its subcellular location is the cytoplasmic vesicle. The protein resides in the clathrin-coated vesicle membrane. Component of the adapter complexes which link clathrin to receptors in coated vesicles. Clathrin-associated protein complexes are believed to interact with the cytoplasmic tails of membrane proteins, leading to their selection and concentration. AP47 is a subunit of the plasma membrane adapter. The polypeptide is AP-1 complex subunit mu (Diplobatis ommata (Ocellated electric ray)).